A 166-amino-acid polypeptide reads, in one-letter code: KH homology domain-containing protein 1C (166 aa).

The KH; atypical domain occupies 19–78 (PLVFDMEEDKEDYIFGPHDEYLHTLEVHSNTLIQLERWFTPTGQTRVTVVGPLKARLWVM).

Belongs to the KHDC1 family.

In Mus musculus (Mouse), this protein is KH homology domain-containing protein 1C (Khdc1c).